A 255-amino-acid chain; its full sequence is Tryptophan synthase alpha chain (255 aa).

Residues E51 and D62 each act as proton acceptor in the active site.

The protein belongs to the TrpA family. As to quaternary structure, tetramer of two alpha and two beta chains.

It carries out the reaction (1S,2R)-1-C-(indol-3-yl)glycerol 3-phosphate + L-serine = D-glyceraldehyde 3-phosphate + L-tryptophan + H2O. It participates in amino-acid biosynthesis; L-tryptophan biosynthesis; L-tryptophan from chorismate: step 5/5. Its function is as follows. The alpha subunit is responsible for the aldol cleavage of indoleglycerol phosphate to indole and glyceraldehyde 3-phosphate. The protein is Tryptophan synthase alpha chain of Maridesulfovibrio salexigens (strain ATCC 14822 / DSM 2638 / NCIMB 8403 / VKM B-1763) (Desulfovibrio salexigens).